The chain runs to 499 residues: UDP-N-acetylmuramoyl-L-alanyl-D-glutamate--2,6-diaminopimelate ligase (499 aa).

A UDP-N-acetyl-alpha-D-muramoyl-L-alanyl-D-glutamate-binding site is contributed by Ser32. 117 to 123 (GTNGKTT) provides a ligand contact to ATP. UDP-N-acetyl-alpha-D-muramoyl-L-alanyl-D-glutamate contacts are provided by residues 159–160 (TT), Ser186, Gln192, and Arg194. N6-carboxylysine is present on Lys226. Meso-2,6-diaminopimelate-binding positions include Arg394, 418–421 (DNPR), Gly469, and Glu473. The Meso-diaminopimelate recognition motif signature appears at 418 to 421 (DNPR).

The protein belongs to the MurCDEF family. MurE subfamily. Mg(2+) is required as a cofactor. Carboxylation is probably crucial for Mg(2+) binding and, consequently, for the gamma-phosphate positioning of ATP.

It localises to the cytoplasm. The catalysed reaction is UDP-N-acetyl-alpha-D-muramoyl-L-alanyl-D-glutamate + meso-2,6-diaminopimelate + ATP = UDP-N-acetyl-alpha-D-muramoyl-L-alanyl-gamma-D-glutamyl-meso-2,6-diaminopimelate + ADP + phosphate + H(+). It functions in the pathway cell wall biogenesis; peptidoglycan biosynthesis. In terms of biological role, catalyzes the addition of meso-diaminopimelic acid to the nucleotide precursor UDP-N-acetylmuramoyl-L-alanyl-D-glutamate (UMAG) in the biosynthesis of bacterial cell-wall peptidoglycan. This is UDP-N-acetylmuramoyl-L-alanyl-D-glutamate--2,6-diaminopimelate ligase from Synechococcus sp. (strain WH7803).